The chain runs to 184 residues: HVA22-like protein c (184 aa).

The next 3 membrane-spanning stretches (helical) occupy residues 13 to 33, 51 to 71, and 73 to 93; these read VLIK…YPLY, LTYW…SKPL, and WFPI…LPQF.

This sequence belongs to the DP1 family. In terms of tissue distribution, predominantly expressed in flower buds and stem.

It is found in the membrane. This chain is HVA22-like protein c (HVA22C), found in Arabidopsis thaliana (Mouse-ear cress).